Here is a 334-residue protein sequence, read N- to C-terminus: Malate dehydrogenase 2 (334 aa).

Residue 19–25 (IGAGKVG) participates in NAD(+) binding. Positions 100 and 106 each coordinate substrate. NAD(+) contacts are provided by residues Asn-113 and 136 to 138 (VSN). Residues Asn-138 and Arg-169 each contribute to the substrate site. His-193 acts as the Proton acceptor in catalysis.

Belongs to the LDH/MDH superfamily.

It carries out the reaction (S)-malate + NAD(+) = oxaloacetate + NADH + H(+). Functionally, catalyzes the reversible oxidation of malate to oxaloacetate. This is Malate dehydrogenase 2 from Aquifex aeolicus (strain VF5).